The chain runs to 362 residues: Phosphoserine aminotransferase (362 aa).

Residue Arg43 participates in L-glutamate binding. Pyridoxal 5'-phosphate-binding positions include 77-78 (AT), Trp103, Thr153, Asp173, and Gln196. An N6-(pyridoxal phosphate)lysine modification is found at Lys197. 238–239 (NT) lines the pyridoxal 5'-phosphate pocket.

The protein belongs to the class-V pyridoxal-phosphate-dependent aminotransferase family. SerC subfamily. Homodimer. Pyridoxal 5'-phosphate serves as cofactor.

It is found in the cytoplasm. It catalyses the reaction O-phospho-L-serine + 2-oxoglutarate = 3-phosphooxypyruvate + L-glutamate. The enzyme catalyses 4-(phosphooxy)-L-threonine + 2-oxoglutarate = (R)-3-hydroxy-2-oxo-4-phosphooxybutanoate + L-glutamate. Its pathway is amino-acid biosynthesis; L-serine biosynthesis; L-serine from 3-phospho-D-glycerate: step 2/3. It participates in cofactor biosynthesis; pyridoxine 5'-phosphate biosynthesis; pyridoxine 5'-phosphate from D-erythrose 4-phosphate: step 3/5. In terms of biological role, catalyzes the reversible conversion of 3-phosphohydroxypyruvate to phosphoserine and of 3-hydroxy-2-oxo-4-phosphonooxybutanoate to phosphohydroxythreonine. The polypeptide is Phosphoserine aminotransferase (Acidithiobacillus ferrooxidans (strain ATCC 23270 / DSM 14882 / CIP 104768 / NCIMB 8455) (Ferrobacillus ferrooxidans (strain ATCC 23270))).